We begin with the raw amino-acid sequence, 1312 residues long: Multidrug resistance protein 3 (1312 aa).

The chain crosses the membrane as a helical span at residues 51–71; the sequence is GFIDYILLIGGIIGAMAAGVL. An ABC transmembrane type-1 1 domain is found at 59 to 369; the sequence is IGGIIGAMAA…VAMPINALST (311 aa). The N-linked (GlcNAc...) asparagine glycan is linked to Asn98. A run of 5 helical transmembrane segments spans residues 127 to 147, 197 to 217, 224 to 244, 302 to 322, and 344 to 364; these read IYFAIGTTVGMFLMHFCFFVL, KFGVLFQTICGFIAGYAIGFS, LVIMAVTPFMLITVLFLGFFA, VVGVGLGMLLFFMMGSLALGS, and MVVFMSVLMATMSIAQVAMPI. Residues 404–643 form the ABC transporter 1 domain; sequence IKLEDVQFRY…KATYYGLVKR (240 aa). Residue 439 to 446 coordinates ATP; the sequence is GASGCGKS. Residues 724 to 1033 enclose the ABC transmembrane type-1 2 domain; sequence LLSFLGLIGG…LGQMIPDVGK (310 aa). 2 consecutive transmembrane segments (helical) span residues 725–745 and 776–796; these read LSFLGLIGGIGAGAVFPFYMI and IWILLFGLAVFVTTYMYLGLF. Residue Asn819 is glycosylated (N-linked (GlcNAc...) asparagine). Helical transmembrane passes span 852–872, 874–894, and 958–978; these read VGNVVNTLSSVGFGVGIAFYY, WKVALCVMAIAPVLIVIVFLN, and AFVSAANTFVTSCISAYSFYI. The ABC transporter 2 domain occupies 1068 to 1307; sequence IEFKDICFRY…KGFYYTLAMQ (240 aa). 1103-1110 contributes to the ATP binding site; sequence GASGCGKS.

Belongs to the ABC transporter superfamily. ABCB family. Multidrug resistance exporter (TC 3.A.1.201) subfamily.

Its subcellular location is the membrane. It carries out the reaction ATP + H2O + xenobioticSide 1 = ADP + phosphate + xenobioticSide 2.. Energy-dependent efflux pump responsible for decreased drug accumulation in multidrug resistance parasites. In Entamoeba histolytica (strain ATCC 30459 / HM-1:IMSS / ABRM), this protein is Multidrug resistance protein 3.